We begin with the raw amino-acid sequence, 274 residues long: Glutamate racemase (274 aa).

Residues 10–11 (DS) and 42–43 (YG) contribute to the substrate site. Catalysis depends on C73, which acts as the Proton donor/acceptor. 74 to 75 (NT) contributes to the substrate binding site. The active-site Proton donor/acceptor is C184. Residue 185–186 (TH) participates in substrate binding.

It belongs to the aspartate/glutamate racemases family.

It catalyses the reaction L-glutamate = D-glutamate. It functions in the pathway cell wall biogenesis; peptidoglycan biosynthesis. In terms of biological role, provides the (R)-glutamate required for cell wall biosynthesis. The chain is Glutamate racemase from Latilactobacillus sakei subsp. sakei (strain 23K) (Lactobacillus sakei subsp. sakei).